A 370-amino-acid chain; its full sequence is High affinity iron permease ftrA (370 aa).

Helical transmembrane passes span 5-25, 52-72, 88-108, 148-168, 179-199, 206-226, and 293-313; these read VFAVPIFFICFRECVETSIIV, VWWGVAIGLFISVCIGAGMIG, LWEGIFSLIASVIITIMGAAL, AMFLLPFITVLREGLEAVVFI, AFPLPVFTGILAGVAIGYLLY, SLQIFLIISTCILYLVAAGLF, and YGSVLSYNLYWIAVIVWFVAM. Residues 335-370 are disordered; it reads RKSAEPGNGEQDVEVSTIPSDLQTESKIPKSGASLV. Residues 351-360 show a composition bias toward polar residues; that stretch reads TIPSDLQTES.

Belongs to the oxidase-dependent Fe transporter (OFeT) (TC 9.A.10.1) family.

Its subcellular location is the cell membrane. Its function is as follows. High affinity iron permease; part of the reductive iron assimilatory system (RIA), a siderophore-independent high affinity iron uptake mechanism. The chain is High affinity iron permease ftrA from Aspergillus fumigatus (strain ATCC MYA-4609 / CBS 101355 / FGSC A1100 / Af293) (Neosartorya fumigata).